The primary structure comprises 251 residues: 2-amino-5-chloromuconate deaminase (251 aa).

In terms of assembly, monomer.

The enzyme catalyses (2Z,4E)-2-aminomuconate + H2O = (2Z,4E)-2-hydroxyhexa-2,4-dienedioate + NH4(+). It functions in the pathway xenobiotic degradation; 4-chloronitrobenzene degradation. It participates in xenobiotic degradation; nitrobenzene degradation. Its activity is regulated as follows. Cysteine residue modifying agents such as p-chloromercuribenzoate and the SH-binding metals Zn(2+), Ni(2+) and Cu(2+) completely inhibit deaminase activity, whereas Ca(2+), Mg(2+) and the histidine residue-modifying agent diethyl pyrocarbonate inhibit the activity by 23 to 50%. Involved in the biodegradation of xenobiotic compounds, such as nitrobenzene and 4-chloronitrobenzene (4-CNB). CnbZ preferentially catalyzes the deamination of 2-amino-5-chloromuconate (2A5CM) to yield 2-hydroxy-5-chloromuconate (2H5CM). Also able to catalyze the deamination of 2-aminomuconate to yield 2-hydroxymuconate, which spontaneously converts into its keto form, 2-oxalocrotonate. In Comamonas testosteroni (Pseudomonas testosteroni), this protein is 2-amino-5-chloromuconate deaminase.